The primary structure comprises 141 residues: Nuclear receptor 2C2-associated protein (141 aa).

It belongs to the NR2C2AP family.

It is found in the nucleus. May act as a repressor of nr2c2-mediated transactivation by suppressing the binding between nr2c2 and its response element in target genes. The polypeptide is Nuclear receptor 2C2-associated protein (nr2c2ap) (Danio rerio (Zebrafish)).